The following is a 210-amino-acid chain: MNKGVFVVIEGVDGAGKTALIEGFKKLYPTKFLNYQLTYTREPGGTLLAEKIRQLLLNETMEPLTEAYLFAAARTEHISKLIKPAIEKEQLVISDRFVFSSFAYQGLSKKIGIDTVKQINHHALRNMMPNFTFILDCNFKEALQRMQKRGNDNLLDEFIKGKNDFDTVRSYYLSLVDKKNCFLINGDNKQEHLEKFIELLTRCLQQPTHY.

11–18 is an ATP binding site; that stretch reads GVDGAGKT.

It belongs to the thymidylate kinase family.

The enzyme catalyses dTMP + ATP = dTDP + ADP. In terms of biological role, phosphorylation of dTMP to form dTDP in both de novo and salvage pathways of dTTP synthesis. In Mycoplasma genitalium (strain ATCC 33530 / DSM 19775 / NCTC 10195 / G37) (Mycoplasmoides genitalium), this protein is Thymidylate kinase (tmk).